A 255-amino-acid chain; its full sequence is uncharacterized protein (255 aa).

Transmembrane regions (helical) follow at residues 99–119 (ISLI…ITSF) and 146–166 (YIGS…ILFL).

The protein localises to the mitochondrion membrane. This is an uncharacterized protein from Schizosaccharomyces pombe (strain 972 / ATCC 24843) (Fission yeast).